A 622-amino-acid polypeptide reads, in one-letter code: 1-deoxy-D-xylulose-5-phosphate synthase (622 aa).

Residues His80 and 121 to 123 contribute to the thiamine diphosphate site; that span reads GHS. Asp152 serves as a coordination point for Mg(2+). Residues 153–154, Asn181, Tyr288, and Glu370 each bind thiamine diphosphate; that span reads GA. Residue Asn181 participates in Mg(2+) binding.

This sequence belongs to the transketolase family. DXPS subfamily. In terms of assembly, homodimer. It depends on Mg(2+) as a cofactor. Thiamine diphosphate is required as a cofactor.

It carries out the reaction D-glyceraldehyde 3-phosphate + pyruvate + H(+) = 1-deoxy-D-xylulose 5-phosphate + CO2. The protein operates within metabolic intermediate biosynthesis; 1-deoxy-D-xylulose 5-phosphate biosynthesis; 1-deoxy-D-xylulose 5-phosphate from D-glyceraldehyde 3-phosphate and pyruvate: step 1/1. Catalyzes the acyloin condensation reaction between C atoms 2 and 3 of pyruvate and glyceraldehyde 3-phosphate to yield 1-deoxy-D-xylulose-5-phosphate (DXP). This Shewanella loihica (strain ATCC BAA-1088 / PV-4) protein is 1-deoxy-D-xylulose-5-phosphate synthase.